Consider the following 113-residue polypeptide: U11-theraphotoxin-Hhn1h (113 aa).

The signal sequence occupies residues 1-21; sequence MNTVRVTFLLVFVLVVSLGQA. The propeptide occupies 22-74; sequence DKDENRMEMQEKTEQGKSYLDFAENLLLQKLEELEAKLLEEDSEESRNSRQKR. Residues 61–83 are disordered; that stretch reads EEDSEESRNSRQKRRIGEGVPCD. Disulfide bonds link C82/C95 and C89/C110.

The protein belongs to the neurotoxin 14 (magi-1) family. 01 (HNTX-16) subfamily. In terms of tissue distribution, expressed by the venom gland.

Its subcellular location is the secreted. Probable ion channel inhibitor. This Cyriopagopus hainanus (Chinese bird spider) protein is U11-theraphotoxin-Hhn1h.